We begin with the raw amino-acid sequence, 156 residues long: Small ribosomal subunit protein uS7 (156 aa).

This sequence belongs to the universal ribosomal protein uS7 family. In terms of assembly, part of the 30S ribosomal subunit. Contacts proteins S9 and S11.

One of the primary rRNA binding proteins, it binds directly to 16S rRNA where it nucleates assembly of the head domain of the 30S subunit. Is located at the subunit interface close to the decoding center, probably blocks exit of the E-site tRNA. The chain is Small ribosomal subunit protein uS7 from Synechococcus sp. (strain CC9902).